An 811-amino-acid polypeptide reads, in one-letter code: U-box domain-containing protein 43 (811 aa).

One can recognise a U-box domain in the interval 24–103 (NIYEAFICPL…EEWRARNDAL (80 aa)). ARM repeat units lie at residues 136–175 (RKIRQRVCNPQLVRLITDMLKSSSHEVRCKALQTLQVVVE), 178–217 (EESKAIVAEGDTVRTIVKFLSQEPSKGREAAVSVLFELSK), 220–261 (ALCE…NLER), 263–302 (EENVRQMAINGRLQPLLAKLLEGSPETKVSMAFYLGVLAL), 303–342 (NNDVKVIVAQTVGSSLIDLMRTRDMSQREAALGALNNISS), 344–388 (EGSA…NIVN), 399–438 (GPHHQTLVSEEIVENLLQLTSNTGPEIQGKLLAVLVGLTS), 444–484 (INVV…NISP), and 489–528 (ELANALRSTVGQLGSLVSIISENTPTITEEQAAAAGLLAE).

It catalyses the reaction S-ubiquitinyl-[E2 ubiquitin-conjugating enzyme]-L-cysteine + [acceptor protein]-L-lysine = [E2 ubiquitin-conjugating enzyme]-L-cysteine + N(6)-ubiquitinyl-[acceptor protein]-L-lysine.. It participates in protein modification; protein ubiquitination. Its function is as follows. Functions as an E3 ubiquitin ligase. The chain is U-box domain-containing protein 43 (PUB43) from Arabidopsis thaliana (Mouse-ear cress).